The primary structure comprises 362 residues: S-adenosylmethionine:tRNA ribosyltransferase-isomerase (362 aa).

It belongs to the QueA family. In terms of assembly, monomer.

Its subcellular location is the cytoplasm. The enzyme catalyses 7-aminomethyl-7-carbaguanosine(34) in tRNA + S-adenosyl-L-methionine = epoxyqueuosine(34) in tRNA + adenine + L-methionine + 2 H(+). The protein operates within tRNA modification; tRNA-queuosine biosynthesis. Transfers and isomerizes the ribose moiety from AdoMet to the 7-aminomethyl group of 7-deazaguanine (preQ1-tRNA) to give epoxyqueuosine (oQ-tRNA). The polypeptide is S-adenosylmethionine:tRNA ribosyltransferase-isomerase (Xanthobacter autotrophicus (strain ATCC BAA-1158 / Py2)).